The following is a 469-amino-acid chain: MKHKVRHIHFVGIGGVGMSGIAEVLLTLGYTVSGSDLAASATTERLAAAGAQIHVGHAEGHVHGANVVVTSTAVQADNPEVMAARAAGIPIVPRAQMLAELMRFKQGIAIAGTHGKTTTTSLVASALGRAGLDPTFVIGGRLTAAGSNARLGSGDYLVAEADESDASFLCLSPVMAVVTNIDADHMDTYGHDFERLKQAFIDFLQRLPFYGRAVLCIDDKHVREILPFVTRPLTTYGLTPDADVRADNIRPVAGQMLFDVVWQQQGEEQRHPVTLNLPGRHNVLNALAAIAIGLECGADIGAIAAGLTEFSGVGRRFQRYGDIALPAGGQATVVDDYGHHPVEMAATLAAARGAFPERRLVLAFQPHRYTRTRDLFEDFVGVLSTVDALLLAEVYPAGEAPIVAADGRALARAVRVAGKVEPVFVERIADLPATLLDQLQDGDVVLTMGAGSIGQTPGRLVTLAGTQAA.

112-118 (GTHGKTT) contributes to the ATP binding site.

The protein belongs to the MurCDEF family.

Its subcellular location is the cytoplasm. It catalyses the reaction UDP-N-acetyl-alpha-D-muramate + L-alanine + ATP = UDP-N-acetyl-alpha-D-muramoyl-L-alanine + ADP + phosphate + H(+). The protein operates within cell wall biogenesis; peptidoglycan biosynthesis. Cell wall formation. The protein is UDP-N-acetylmuramate--L-alanine ligase of Laribacter hongkongensis (strain HLHK9).